Reading from the N-terminus, the 404-residue chain is Major outer membrane porin (404 aa).

The first 22 residues, 1–22 (MKKLLKSVLAFAVLGSASSLHA), serve as a signal peptide directing secretion. The segment at 85-110 (GPVPTTTDTDAAADITTSTPRENPAY) is disordered. Residues 89–103 (TTTDTDAAADITTST) are compositionally biased toward low complexity.

This sequence belongs to the chlamydial porin (CP) (TC 1.B.2) family. In terms of assembly, part of a disulfide cross-linked outer membrane complex (COMC) composed of the major outer membrane porin (MOMP), the small cysteine-rich protein (OmcA) and the large cysteine-rich periplasmic protein (OmcB).

Its subcellular location is the cell outer membrane. Functionally, in elementary bodies (EBs, the infectious stage, which is able to survive outside the host cell) provides the structural integrity of the outer envelope through disulfide cross-links with the small cysteine-rich protein and the large cysteine-rich periplasmic protein. It has been described in publications as the Sarkosyl-insoluble COMC (Chlamydia outer membrane complex), and serves as the functional equivalent of peptidoglycan. Permits diffusion of specific solutes through the outer membrane. In Chlamydia muridarum, this protein is Major outer membrane porin (ompA).